The chain runs to 350 residues: MNAMNPQHENAQTVTSMTMIQALRSAMDIMLERDDDVVVFGQDVGYFGGVFRCTEGLQKKYGTSRVFDAPISESGIIGAAVGMGAYGLRPVVEIQFADYVYPASDQLISEAARLRYRSAGDFIVPMTVRMPCGGGIYGGQTHSQSPEAMFTQVCGLRTVMPSNPYDAKGLLIACIENDDPVIFLEPKRLYNGPFDGHHDRPVTPWSKHPASQVPDGYYKVPLDKAAIVRPGAALTVLTYGTMVYVAQAAADETGLDAEIIDLRSLWPLDLETIVASVKKTGRCVIAHEATRTCGFGAELMSLVQEHCFHHLEAPIERVTGWDTPYPHAQEWAYFPGPARVGAAFKRVMEV.

Heterodimer of an alpha and a beta chain. The cofactor is thiamine diphosphate.

The enzyme catalyses N(6)-[(R)-lipoyl]-L-lysyl-[protein] + 3-methyl-2-oxobutanoate + H(+) = N(6)-[(R)-S(8)-2-methylpropanoyldihydrolipoyl]-L-lysyl-[protein] + CO2. Its function is as follows. The branched-chain alpha-keto dehydrogenase complex catalyzes the overall conversion of alpha-keto acids to acyl-CoA and CO(2). It contains multiple copies of three enzymatic components: branched-chain alpha-keto acid decarboxylase (E1), lipoamide acyltransferase (E2) and lipoamide dehydrogenase (E3). The sequence is that of 2-oxoisovalerate dehydrogenase subunit beta (bkdA2) from Pseudomonas aeruginosa (strain ATCC 15692 / DSM 22644 / CIP 104116 / JCM 14847 / LMG 12228 / 1C / PRS 101 / PAO1).